We begin with the raw amino-acid sequence, 603 residues long: MMQLGGGTPTTTAAATTVTTATAPPPQSNNNDSAATEAAAAAVGAFEVSEEMHDRGFGGNRWPRQETLALLKIRSDMGIAFRDASVKGPLWEEVSRKMAEHGYIRNAKKCKEKFENVYKYHKRTKEGRTGKSEGKTYRFFDQLEALESQSTTSLHHHQQQTPLRPQQNNNNNNNNNNNSSIFSTPPPVTTVMPTLPSSSIPPYTQQINVPSFPNISGDFLSDNSTSSSSSYSTSSDMEMGGGTATTRKKRKRKWKVFFERLMKQVVDKQEELQRKFLEAVEKREHERLVREESWRVQEIARINREHEILAQERSMSAAKDAAVMAFLQKLSEKQPNQPQPQPQPQQVRPSMQLNNNNQQQPPQRSPPPQPPAPLPQPIQAVVSTLDTTKTDNGGDQNMTPAASASSSRWPKVEIEALIKLRTNLDSKYQENGPKGPLWEEISAGMRRLGFNRNSKRCKEKWENINKYFKKVKESNKKRPEDSKTCPYFHQLDALYRERNKFHSNNNIAASSSSSGLVKPDNSVPLMVQPEQQWPPAVTTATTTPAAAQPDQQSQPSEQNFDDEEGTDEEYDDEDEEEENEEEEGGEFELVPSNNNNNKTTNNL.

A Myb-like 1 domain is found at 60–118 (NRWPRQETLALLKIRSDMGIAFRDASVKGPLWEEVSRKMAEHGYIRNAKKCKEKFENVY). Disordered regions lie at residues 149–201 (QSTT…SSIP), 220–249 (LSDN…TRKK), 333–408 (KQPN…SSSR), and 532–603 (QWPP…TNNL). Low complexity-rich tracts occupy residues 168-178 (NNNNNNNNNNN), 189-198 (TTVMPTLPSS), 221-236 (SDNS…TSSD), and 344-362 (PQQV…QQPP). Residues 363-376 (QRSPPPQPPAPLPQ) show a composition bias toward pro residues. Polar residues predominate over residues 381-408 (VVSTLDTTKTDNGGDQNMTPAASASSSR). The Myb-like 2 domain maps to 401 to 465 (AASASSSRWP…RCKEKWENIN (65 aa)). Over residues 532–555 (QWPPAVTTATTTPAAAQPDQQSQP) the composition is skewed to low complexity. The span at 559 to 586 (NFDDEEGTDEEYDDEDEEEENEEEEGGE) shows a compositional bias: acidic residues. Positions 593–603 (NNNNNKTTNNL) are enriched in low complexity.

Its subcellular location is the nucleus. Functionally, transcription repressor that negatively regulates root hair growth by directly binding RSL4 promoter and repressing RSL4 expression. Required for the synthesis of seed coat mucilage. This Arabidopsis thaliana (Mouse-ear cress) protein is Trihelix transcription factor DF1.